The primary structure comprises 391 residues: Phosphoprotein (391 aa).

3 positions are modified to phosphothreonine: Thr10, Thr16, and Thr39. Residues 55 to 65 are compositionally biased toward polar residues; it reads KNIQYPTTSHQ. Positions 55–90 are disordered; that stretch reads KNIQYPTTSHQGSKSKGRGSGARPIIVSSSEGGTGG. Residue Ser69 is modified to Phosphoserine. Residues Thr91, Thr150, and Thr165 each carry the phosphothreonine modification. The tract at residues 145–208 is disordered; the sequence is TSTPVTEFKR…PQQDSTPANV (64 aa). A Phosphoserine modification is found at Ser188. The multimerization stretch occupies residues 216-279; it reads ISANEIMDLL…MATVKIMDPG (64 aa). The stretch at 218–245 forms a coiled coil; it reads ANEIMDLLRGMDARLQHLEQKVDKVLAQ. Thr250 is modified (phosphothreonine). Ser257 is modified (phosphoserine). 2 positions are modified to phosphothreonine: Thr258 and Thr282. Phosphoserine occurs at positions 292 and 294. Thr298 is modified (phosphothreonine). Residues Ser301 and Ser374 each carry the phosphoserine modification. An interaction with the nucleoprotein region spans residues 343–391; that stretch reads AGRKVMITKMITDCVANPQMKQVFEQRLAKASTEDALNDIKRDIIRSAI. A Phosphothreonine modification is found at Thr375.

The protein belongs to the rubulavirus/avulavirus P protein family. Homotetramer. Interacts (via multimerization domain) with polymerase L; this interaction forms the polymerase L-P complex. Interacts (via N-terminus) with N0 (via Ncore); this interaction allows P to chaperon N0 to avoid N polymerization before encapsidation. Interacts (via C-terminus) with N-RNA template; this interaction positions the polymerase on the template for both transcription and replication. Interacts with host RPS6KB1 kinase; this interaction may play a role in the viral replication and transcription.

Its function is as follows. Essential cofactor of the RNA polymerase L that plays a central role in the transcription and replication by forming the polymerase complex with RNA polymerase L and recruiting L to the genomic N-RNA template for RNA synthesis. Also plays a central role in the encapsidation of nascent RNA chains by forming the encapsidation complex with the nucleocapsid protein N (N-P complex). Acts as a chaperone for newly synthesized free N protein, so-called N0, allowing encapsidation of nascent RNA chains during replication. The nucleoprotein protein N prevents excessive phosphorylation of P, which leads to down-regulation of viral transcription/ replication. Participates, together with N, in the formation of viral factories (viroplasms), which are large inclusions in the host cytoplasm where replication takes place. The chain is Phosphoprotein from Mumps virus genotype B (strain Miyahara vaccine) (MuV).